A 962-amino-acid chain; its full sequence is Protease 3 (962 aa).

An N-terminal signal peptide occupies residues M1–A23. Residue H88 coordinates Zn(2+). E91 acts as the Proton acceptor in catalysis. Residues H92 and E169 each contribute to the Zn(2+) site.

This sequence belongs to the peptidase M16 family. Monomer. Zn(2+) is required as a cofactor.

It is found in the periplasm. The catalysed reaction is Preferential cleavage of 16-Tyr-|-Leu-17 and 25-Phe-|-Tyr-26 bonds of oxidized insulin B chain. Also acts on other substrates of Mw less than 7 kDa such as insulin and glucagon.. Functionally, endopeptidase that degrades small peptides of less than 7 kDa, such as glucagon and insulin. This Shigella flexneri protein is Protease 3 (ptrA).